Reading from the N-terminus, the 243-residue chain is Methylthioribulose-1-phosphate dehydratase (243 aa).

Cys90 provides a ligand contact to substrate. Residues His108 and His110 each coordinate Zn(2+). Glu131 (proton donor/acceptor) is an active-site residue. Residue His193 coordinates Zn(2+).

The protein belongs to the aldolase class II family. MtnB subfamily. Requires Zn(2+) as cofactor.

It is found in the cytoplasm. The catalysed reaction is 5-(methylsulfanyl)-D-ribulose 1-phosphate = 5-methylsulfanyl-2,3-dioxopentyl phosphate + H2O. The protein operates within amino-acid biosynthesis; L-methionine biosynthesis via salvage pathway; L-methionine from S-methyl-5-thio-alpha-D-ribose 1-phosphate: step 2/6. In terms of biological role, catalyzes the dehydration of methylthioribulose-1-phosphate (MTRu-1-P) into 2,3-diketo-5-methylthiopentyl-1-phosphate (DK-MTP-1-P). The chain is Methylthioribulose-1-phosphate dehydratase from Zygosaccharomyces rouxii (strain ATCC 2623 / CBS 732 / NBRC 1130 / NCYC 568 / NRRL Y-229).